Consider the following 494-residue polypeptide: ATP synthase subunit beta, plastid (494 aa).

169–176 (GGAGVGKT) is a binding site for ATP.

The protein belongs to the ATPase alpha/beta chains family. In terms of assembly, F-type ATPases have 2 components, CF(1) - the catalytic core - and CF(0) - the membrane proton channel. CF(1) has five subunits: alpha(3), beta(3), gamma(1), delta(1), epsilon(1). CF(0) has four main subunits: a(1), b(1), b'(1) and c(9-12).

The protein localises to the plastid thylakoid membrane. It carries out the reaction ATP + H2O + 4 H(+)(in) = ADP + phosphate + 5 H(+)(out). Produces ATP from ADP in the presence of a proton gradient across the membrane. The catalytic sites are hosted primarily by the beta subunits. In Cuscuta gronovii (Common dodder), this protein is ATP synthase subunit beta, plastid (atpB).